Consider the following 476-residue polypeptide: Bifunctional protein HldE (476 aa).

The ribokinase stretch occupies residues 1 to 318 (MKVTLPDFRR…ENAIRGRAET (318 aa)). An ATP-binding site is contributed by 195–198 (NLSE). The active site involves Asp264. Residues 344–476 (MTNGIFDILH…IIQSIKNGRG (133 aa)) are cytidylyltransferase.

In the N-terminal section; belongs to the carbohydrate kinase PfkB family. It in the C-terminal section; belongs to the cytidylyltransferase family. As to quaternary structure, homodimer.

The enzyme catalyses D-glycero-beta-D-manno-heptose 7-phosphate + ATP = D-glycero-beta-D-manno-heptose 1,7-bisphosphate + ADP + H(+). It carries out the reaction D-glycero-beta-D-manno-heptose 1-phosphate + ATP + H(+) = ADP-D-glycero-beta-D-manno-heptose + diphosphate. Its pathway is nucleotide-sugar biosynthesis; ADP-L-glycero-beta-D-manno-heptose biosynthesis; ADP-L-glycero-beta-D-manno-heptose from D-glycero-beta-D-manno-heptose 7-phosphate: step 1/4. It functions in the pathway nucleotide-sugar biosynthesis; ADP-L-glycero-beta-D-manno-heptose biosynthesis; ADP-L-glycero-beta-D-manno-heptose from D-glycero-beta-D-manno-heptose 7-phosphate: step 3/4. Functionally, catalyzes the phosphorylation of D-glycero-D-manno-heptose 7-phosphate at the C-1 position to selectively form D-glycero-beta-D-manno-heptose-1,7-bisphosphate. In terms of biological role, catalyzes the ADP transfer from ATP to D-glycero-beta-D-manno-heptose 1-phosphate, yielding ADP-D-glycero-beta-D-manno-heptose. This chain is Bifunctional protein HldE, found in Yersinia pseudotuberculosis serotype O:1b (strain IP 31758).